A 495-amino-acid chain; its full sequence is MWQIVFFTLSCDLVRAAAYNNFRRSMDSIGRRQYQVQHGSCSYTFLLPETDNCRSPGSYVPNAVQRDAPLDYDDSVQRLQVLENIMENNTQWLIKLENYIQDNMKKEMVEMQQNAVQNQTAVMIEIGTNLLNQTAEQTRKLTDVEAQVLNQTTRLELQLLEHSLSTNKLEKQILDQTSEINKLQDKNSFLEKKVLDMEDKHIVQLRSIKEEKDQLQVLVSKQNSIIEELEKQLVTATVNNSVLQKQQHDLMETVHSLLTMISPSKSPKDTFVAKEEQIIYRDCAEVFKSGLTTNGIYTLTFPNSTEEIKAYCDMETSGGGWTVIQRREDGSVDFQRTWKEYKVGFGNPSGEHWLGNEFVFQVTNQQPYVLKIHLKDWEGNEAYSLYEHFYLSGEELNYRIHLKGLTGTAGKISSISQPGNDFSTKDADNDKCICKCSQMLTGGWWFDACGPSNLNGMYYPQRQNTNKFNGIKWYYWKGSGYSLKGTTMMIRPADF.

The N-terminal stretch at 1 to 18 (MWQIVFFTLSCDLVRAAA) is a signal peptide. Asn-88, Asn-118, Asn-132, Asn-150, Asn-239, and Asn-303 each carry an N-linked (GlcNAc...) asparagine glycan. Residues 165 to 247 (STNKLEKQIL…VNNSVLQKQQ (83 aa)) are a coiled coil. The 221-residue stretch at 274–494 (KEEQIIYRDC…GTTMMIRPAD (221 aa)) folds into the Fibrinogen C-terminal domain. An intrachain disulfide couples Cys-283 to Cys-312. Ca(2+)-binding residues include Asp-428, Asp-430, Cys-432, and Cys-434. Cystine bridges form between Cys-432–Cys-434 and Cys-436–Cys-449.

In terms of assembly, interacts with TEK/TIE2, competing for the same binding site as ANGPT1. Interacts with ITGA5. Interacts with SVEP1/polydom. Interacts with THBD; this interaction significantly inhibits the generation of activated PC and TAFIa/CPB2 by the thrombin/thrombomodulin complex.

Its subcellular location is the secreted. In terms of biological role, binds to TEK/TIE2, competing for the ANGPT1 binding site, and modulating ANGPT1 signaling. Can induce tyrosine phosphorylation of TEK/TIE2 in the absence of ANGPT1. In the absence of angiogenic inducers, such as VEGF, ANGPT2-mediated loosening of cell-matrix contacts may induce endothelial cell apoptosis with consequent vascular regression. In concert with VEGF, it may facilitate endothelial cell migration and proliferation, thus serving as a permissive angiogenic signal. Involved in the regulation of lymphangiogenesis. This Canis lupus familiaris (Dog) protein is Angiopoietin-2 (ANGPT2).